A 156-amino-acid chain; its full sequence is MALEKSLVLLPLFVLMLLVLGWVQPSLGKESRAKKFQRQHMDSDSSPSSNSTYCNQMMRRRNMTQGRCKPVNTFVHEPLVDVQNVCFQEKVTCKNGQANCYKSNSSMHITDCRLTNGSRYPNCAYRTSPKERHIIVACEGSPYVPVHFDASVEDST.

The first 28 residues, 1-28 (MALEKSLVLLPLFVLMLLVLGWVQPSLG), serve as a signal peptide directing secretion. Substrate contacts are provided by lysine 35 and arginine 38. Histidine 40 functions as the Proton acceptor in the catalytic mechanism. Residues asparagine 50 and asparagine 62 are each glycosylated (N-linked (GlcNAc...) asparagine). Intrachain disulfides connect cysteine 54–cysteine 112, cysteine 68–cysteine 123, cysteine 86–cysteine 138, and cysteine 93–cysteine 100. Residues 69–73 (KPVNT) and lysine 94 each bind substrate. Asparagine 104 carries an N-linked (GlcNAc...) asparagine glycan. Arginine 113 lines the substrate pocket. A glycan (N-linked (GlcNAc...) asparagine) is linked at asparagine 116. Histidine 147 acts as the Proton donor in catalysis.

This sequence belongs to the pancreatic ribonuclease family. Monomer. Interacts with and forms tight 1:1 complexes with RNH1. Dimerization of two such complexes may occur. Interaction with RNH1 inhibits this protein.

The protein resides in the secreted. It catalyses the reaction an [RNA] containing cytidine + H2O = an [RNA]-3'-cytidine-3'-phosphate + a 5'-hydroxy-ribonucleotide-3'-[RNA].. It carries out the reaction an [RNA] containing uridine + H2O = an [RNA]-3'-uridine-3'-phosphate + a 5'-hydroxy-ribonucleotide-3'-[RNA].. Functionally, endonuclease that catalyzes the cleavage of RNA on the 3' side of pyrimidine nucleotides. Acts on single-stranded and double-stranded RNA. In Nomascus leucogenys (Northern white-cheeked gibbon), this protein is Ribonuclease pancreatic (RNASE1).